We begin with the raw amino-acid sequence, 1182 residues long: MSMGRSPSTTFRSRTGSHGARDLIAGHGRNSRRISQMHVNILHPQLQTMVEQWQMRERPSLETENGKGSLLLENEGVADIITMCPFGEVISVVFPWFLANVRTSLEIKLSDFKHQLFELIAPMKWGTYSVKPQDYVFRQLNNFGEIEVIFNDDQPLSKLELHGTFPMLFLYQPDGINRDKELMSDISHCLGYSLDKLEESLDEELRQFRASLWARTKKTCLTRGLEGTSHYAFPEEQYLCVGESCPKDLESKVKAAKLSYQMFWRKRKAEINGVCEKMMKIQIEFNPNETPKSLLHTFLYEMRKLDVYDTDDPADEGWFLQLAGRTTFVTNPDVKLTSYDGVRSELESYRCPGFVVRRQSLVLKDYCRPKPLYEPHYVRAHERKLALDVLSVSIDSTPKQSKNSDMVMTDFRPTASLKQVSLWDLDANLMIRPVNISGFDFPADVDMYVRIEFSVYVGTLTLASKSTTKVNAQFAKWNKEMYTFDLYMKDMPPSAVLSIRVLYGKVKLKSEEFEVGWVNMSLTDWRDELRQGQFLFHLWAPEPTANRSRIGENGARIGTNAAVTIEISSYGGRVRMPSQGQYTYLVKHRSTWTETLNIMGDDYESCIRDPGYKKLQMLVKKHESGIVLEEDEQRHVWMWRRYIQKQEPDLLIVLSELAFVWTDRENFSELYVMLEKWKPPSVAAALTLLGKRCTDRVIRKFAVEKLNEQLSPVTFHLFILPLIQALKYEPRAQSEVGMMLLTRALCDYRIGHRLFWLLRAEIARLRDCDLKSEEYRRISLLMEAYLRGNEEHIKIITRQVDMVDELTRISTLVKGMPKDVATMKLRDELRSISHKMENMDSPLDPVYKLGEMIIDKAIVLGSAKRPLMLHWKNKNPKSDLHLPFCAMIFKNGDDLRQDMLVLQVLEVMDNIWKAANIDCCLNPYAVLPMGEMIGIIEVVPNCKTIFEIQVGTGFMNTAVRSIDPSFMNKWIRKQCGIEDEKKKSKKDSTKNPIEKKIDNTQAMKKYFESVDRFLYSCVGYSVATYIMGIKDRHSDNLMLTEDGKYFHIDFGHILGHGKTKLGIQRDRQPFILTEHFMTVIRSGKSVDGNSHELQKFKTLCVEAYEVMWNNRDLFVSLFTLMLGMELPELSTKADLDHLKKTLFCNGESKEEARKFFAGIYEEAFNGSWSTKTNWLFHAVKHY.

Polar residues predominate over residues 1-16; that stretch reads MSMGRSPSTTFRSRTG. The tract at residues 1-24 is disordered; the sequence is MSMGRSPSTTFRSRTGSHGARDLI. Residues 74–174 form the PI3K-ABD domain; that stretch reads NEGVADIITM…FPMLFLYQPD (101 aa). Positions 266 to 358 constitute a PI3K-RBD domain; that stretch reads KRKAEINGVC…YRCPGFVVRR (93 aa). In terms of domain architecture, C2 PI3K-type spans 425 to 577; that stretch reads LDANLMIRPV…SSYGGRVRMP (153 aa). Positions 601 to 788 constitute a PIK helical domain; the sequence is DDYESCIRDP…SLLMEAYLRG (188 aa). In terms of domain architecture, PI3K/PI4K catalytic spans 853 to 1168; sequence IIDKAIVLGS…IYEEAFNGSW (316 aa). Residues 859 to 865 form a G-loop region; sequence VLGSAKR. The interval 1028–1036 is catalytic loop; it reads GIKDRHSDN. The activation loop stretch occupies residues 1047–1073; sequence HIDFGHILGHGKTKLGIQRDRQPFILT.

The protein belongs to the PI3/PI4-kinase family.

It carries out the reaction a 1,2-diacyl-sn-glycero-3-phospho-(1D-myo-inositol) + ATP = a 1,2-diacyl-sn-glycero-3-phospho-(1D-myo-inositol-3-phosphate) + ADP + H(+). Functionally, phosphatidylinositol 3-kinase homolog that regulates longevity and diapause. Promotes cell survival during embryonic development by recruiting akt-1/2 to the plasma membrane through the production of PtdIns(3,4,5)P3. Could function in the development or neuroendocrine signaling of the dauer pathway. Mediates susceptibility to enteropathogenic E.coli infection. May negatively regulate AYI interneuron neurite outgrowth. Plays a role in aversive olfactory learning when an odor is associated with food deprivation. Regulates this process by promoting the nuclear relocalization of egl-4 in AWC olfactory neurons after odor conditioning. The protein is Phosphatidylinositol 3-kinase age-1 of Caenorhabditis elegans.